We begin with the raw amino-acid sequence, 214 residues long: Ribonuclease HII (214 aa).

In terms of domain architecture, RNase H type-2 spans 26 to 214 (EIVCGVDEAG…PVRAALDLIR (189 aa)). Asp32, Glu33, and Asp124 together coordinate a divalent metal cation.

Belongs to the RNase HII family. The cofactor is Mn(2+). Mg(2+) is required as a cofactor.

The protein localises to the cytoplasm. The enzyme catalyses Endonucleolytic cleavage to 5'-phosphomonoester.. Endonuclease that specifically degrades the RNA of RNA-DNA hybrids. In Burkholderia lata (strain ATCC 17760 / DSM 23089 / LMG 22485 / NCIMB 9086 / R18194 / 383), this protein is Ribonuclease HII.